Here is a 148-residue protein sequence, read N- to C-terminus: Aspartate carbamoyltransferase regulatory chain (148 aa).

Zn(2+)-binding residues include C106, C111, C134, and C137.

The protein belongs to the PyrI family. As to quaternary structure, contains catalytic and regulatory chains. Zn(2+) is required as a cofactor.

Its function is as follows. Involved in allosteric regulation of aspartate carbamoyltransferase. In Methanococcus maripaludis (strain C7 / ATCC BAA-1331), this protein is Aspartate carbamoyltransferase regulatory chain.